The primary structure comprises 240 residues: MFSSHASLPIHSRRLAAGLDSRWQQPQIQAIAGSQAIVPTVVEQSGRGERAFDIYSRLLRERIVFLGTGVDDAVADSIVAQLLFLEAEDPEKDIQLYINSPGGSVTAGMAIYDTMQQVAPDVATICFGLAASMGAFLLSGGAQGKRMALPSARIMIHQPLGGAQGQAVDIEIQAREILYHKSTLNDLLAQHTGQPLEKIEVDTDRDFFMSPEEAKAYGLIDQVLTRPTMAITDHNDAVLQ.

Serine 132 functions as the Nucleophile in the catalytic mechanism. Histidine 157 is a catalytic residue.

The protein belongs to the peptidase S14 family. In terms of assembly, fourteen ClpP subunits assemble into 2 heptameric rings which stack back to back to give a disk-like structure with a central cavity, resembling the structure of eukaryotic proteasomes.

Its subcellular location is the cytoplasm. It carries out the reaction Hydrolysis of proteins to small peptides in the presence of ATP and magnesium. alpha-casein is the usual test substrate. In the absence of ATP, only oligopeptides shorter than five residues are hydrolyzed (such as succinyl-Leu-Tyr-|-NHMec, and Leu-Tyr-Leu-|-Tyr-Trp, in which cleavage of the -Tyr-|-Leu- and -Tyr-|-Trp bonds also occurs).. Cleaves peptides in various proteins in a process that requires ATP hydrolysis. Has a chymotrypsin-like activity. Plays a major role in the degradation of misfolded proteins. The polypeptide is ATP-dependent Clp protease proteolytic subunit 2 (Synechococcus elongatus (strain ATCC 33912 / PCC 7942 / FACHB-805) (Anacystis nidulans R2)).